Consider the following 130-residue polypeptide: Small ribosomal subunit protein uS11c (130 aa).

The protein belongs to the universal ribosomal protein uS11 family. In terms of assembly, part of the 30S ribosomal subunit.

The protein localises to the plastid. It localises to the chloroplast. This Marsilea quadrifolia (European water clover) protein is Small ribosomal subunit protein uS11c.